Consider the following 447-residue polypeptide: Phosphoglucosamine mutase (447 aa).

The active-site Phosphoserine intermediate is S102. Mg(2+) contacts are provided by S102, D241, D243, and D245. A Phosphoserine modification is found at S102.

This sequence belongs to the phosphohexose mutase family. Mg(2+) serves as cofactor. Post-translationally, activated by phosphorylation.

It carries out the reaction alpha-D-glucosamine 1-phosphate = D-glucosamine 6-phosphate. In terms of biological role, catalyzes the conversion of glucosamine-6-phosphate to glucosamine-1-phosphate. In Symbiobacterium thermophilum (strain DSM 24528 / JCM 14929 / IAM 14863 / T), this protein is Phosphoglucosamine mutase.